Here is a 368-residue protein sequence, read N- to C-terminus: Methionine import ATP-binding protein MetN (368 aa).

In terms of domain architecture, ABC transporter spans 5–260 (IELNNLSVQF…PKEALTKQFI (256 aa)). 41–48 (GYSGAGKS) lines the ATP pocket.

This sequence belongs to the ABC transporter superfamily. Methionine importer (TC 3.A.1.24) family. In terms of assembly, the complex is composed of two ATP-binding proteins (MetN), two transmembrane proteins (MetI) and a solute-binding protein (MetQ).

The protein localises to the cell membrane. It carries out the reaction L-methionine(out) + ATP + H2O = L-methionine(in) + ADP + phosphate + H(+). The enzyme catalyses D-methionine(out) + ATP + H2O = D-methionine(in) + ADP + phosphate + H(+). Functionally, part of the ABC transporter complex MetNIQ involved in methionine import. Responsible for energy coupling to the transport system. The chain is Methionine import ATP-binding protein MetN from Lactococcus lactis subsp. cremoris (strain SK11).